The following is a 349-amino-acid chain: D-alanine--D-alanine ligase (349 aa).

In terms of domain architecture, ATP-grasp spans 133-335 (QVLESATTIP…YSVLIEELVS (203 aa)). 163–218 (EEKLIYPVFVKPANMGSSVGISKAENRTDLKQAIALALKYDSRVLIEQGVDAREIE) contributes to the ATP binding site. Positions 289, 302, and 304 each coordinate Mg(2+).

It belongs to the D-alanine--D-alanine ligase family. Mg(2+) is required as a cofactor. The cofactor is Mn(2+).

Its subcellular location is the cytoplasm. It carries out the reaction 2 D-alanine + ATP = D-alanyl-D-alanine + ADP + phosphate + H(+). Its pathway is cell wall biogenesis; peptidoglycan biosynthesis. Cell wall formation. This is D-alanine--D-alanine ligase from Streptococcus mutans serotype c (strain ATCC 700610 / UA159).